Reading from the N-terminus, the 348-residue chain is Dihydroorotase (348 aa).

Residues H14 and H16 each coordinate Zn(2+). Residues 16-18 (HLR) and N42 each bind substrate. Zn(2+) contacts are provided by K100, H137, and H175. K100 carries the post-translational modification N6-carboxylysine. H137 is a binding site for substrate. A substrate-binding site is contributed by L220. Zn(2+) is bound at residue D248. The active site involves D248. H252 and A264 together coordinate substrate.

It belongs to the metallo-dependent hydrolases superfamily. DHOase family. Class II DHOase subfamily. Homodimer. Zn(2+) is required as a cofactor.

The catalysed reaction is (S)-dihydroorotate + H2O = N-carbamoyl-L-aspartate + H(+). The protein operates within pyrimidine metabolism; UMP biosynthesis via de novo pathway; (S)-dihydroorotate from bicarbonate: step 3/3. Catalyzes the reversible cyclization of carbamoyl aspartate to dihydroorotate. In Pseudomonas entomophila (strain L48), this protein is Dihydroorotase.